The following is a 216-amino-acid chain: Probable transaldolase (216 aa).

Lys-83 functions as the Schiff-base intermediate with substrate in the catalytic mechanism.

This sequence belongs to the transaldolase family. Type 3B subfamily.

The protein localises to the cytoplasm. It catalyses the reaction D-sedoheptulose 7-phosphate + D-glyceraldehyde 3-phosphate = D-erythrose 4-phosphate + beta-D-fructose 6-phosphate. Its pathway is carbohydrate degradation; pentose phosphate pathway; D-glyceraldehyde 3-phosphate and beta-D-fructose 6-phosphate from D-ribose 5-phosphate and D-xylulose 5-phosphate (non-oxidative stage): step 2/3. Its function is as follows. Transaldolase is important for the balance of metabolites in the pentose-phosphate pathway. In Symbiobacterium thermophilum (strain DSM 24528 / JCM 14929 / IAM 14863 / T), this protein is Probable transaldolase.